A 629-amino-acid polypeptide reads, in one-letter code: tRNA uridine 5-carboxymethylaminomethyl modification enzyme MnmG (629 aa).

Residues 13–18 (GGGHAG), Val-125, and Ser-180 contribute to the FAD site. Residue 273-287 (GPRYCPSIEDKVMRF) coordinates NAD(+). Gln-370 serves as a coordination point for FAD.

Belongs to the MnmG family. Homodimer. Heterotetramer of two MnmE and two MnmG subunits. FAD is required as a cofactor.

It is found in the cytoplasm. NAD-binding protein involved in the addition of a carboxymethylaminomethyl (cmnm) group at the wobble position (U34) of certain tRNAs, forming tRNA-cmnm(5)s(2)U34. This Salmonella paratyphi C (strain RKS4594) protein is tRNA uridine 5-carboxymethylaminomethyl modification enzyme MnmG.